A 319-amino-acid chain; its full sequence is tRNA-cytidine(32) 2-sulfurtransferase (319 aa).

The PP-loop motif signature appears at 43 to 48; sequence SGGKDS. 3 residues coordinate [4Fe-4S] cluster: Cys118, Cys121, and Cys209.

The protein belongs to the TtcA family. As to quaternary structure, homodimer. Mg(2+) serves as cofactor. [4Fe-4S] cluster is required as a cofactor.

Its subcellular location is the cytoplasm. The catalysed reaction is cytidine(32) in tRNA + S-sulfanyl-L-cysteinyl-[cysteine desulfurase] + AH2 + ATP = 2-thiocytidine(32) in tRNA + L-cysteinyl-[cysteine desulfurase] + A + AMP + diphosphate + H(+). It functions in the pathway tRNA modification. Catalyzes the ATP-dependent 2-thiolation of cytidine in position 32 of tRNA, to form 2-thiocytidine (s(2)C32). The sulfur atoms are provided by the cysteine/cysteine desulfurase (IscS) system. This chain is tRNA-cytidine(32) 2-sulfurtransferase, found in Neisseria meningitidis serogroup A / serotype 4A (strain DSM 15465 / Z2491).